The sequence spans 50 residues: Insulin 2 (50 aa).

Intrachain disulfides connect Cys-8-Cys-36, Cys-20-Cys-49, and Cys-35-Cys-40.

The protein belongs to the insulin family. As to quaternary structure, heterodimer of a B chain and an A chain linked by two disulfide bonds.

Its subcellular location is the secreted. Functionally, insulin decreases blood glucose concentration. It increases cell permeability to monosaccharides, amino acids and fatty acids. It accelerates glycolysis, the pentose phosphate cycle, and glycogen synthesis in liver. This Batrachoididae sp. (Toadfish) protein is Insulin 2 (ins2).